Here is a 1902-residue protein sequence, read N- to C-terminus: MLTDFLQAPVMAPWSPFSLHLLLLFLPLLPLTRVHRFSVPNTSFNHLVLAPDQGKLYVGAVNHLFQLSPELKMESVAVTGPVIDSPDCVPFRDLAECPQAQLTDNANQLLLVSSRTQELVACGQVKQGVCEKRRLGDVTQVLYQAEDPGDGQFVAANTLGVTTVGLVVPLPGRDLLLVARGLAGKLSAGVPPLTVRQLAGPQPFSSEGLGRLVVGDFSDYNNSYVGAFSDAHSAYFVFRRRGARAQTEYRSYVARVCLRDVNLYSYVEMPLTCHGQGLIQAAFLTPDTLLGAFSAGTSQAQAALCAFPLADLDRSMEQARRLCYTTGGQGPSGMEEATVEYGVTSRCVTLPPDSPESYPCGDEHTPSPIAGRQPLEAQPLLQLGQSISAVAALQTDGHTIAFLGDTQGQLHKVFLNSSHGQVYHSQQVGPPGSAISPDLLVDSNGDHLYVLTAQQVDRILVAACPQFPNCTTCLQARDPLCGWCILQGRCTRRGECGRAAQPNHWLWSYEDNHCPYIQSLLPAQHPRQEQGQIILSVPRLPTLAMDEYFHCAFGGYNSLAQVEEPHVVCTTPPQDQMPPNPPGSDHVTLPLALMFEDVVLTATTFSFYDCSAVQALEVAAPCRACVSSLWRCHWCPQSSHCIYGEHCPEGEKAVYSAQEVDILVRGPEACPQVEGLASPQLVPVGWESHVTLHIQNLHYFQGLPALYHCWLELPGKLQKLPASLEETSRDSGLIHCQAQQFYPSMSQWELPVPIYVTRGEIQRLDNAGDLHVTLYDCAMGHPDCSHCQAANGSLSCLWCGDGQPACRYGPLCPPGAVEQLCPIPSIDVIEPLTGPPEGGLAITILGSNLGQAFNDVRNAVTVAGQPCNPDPSLYRISARIVCVTSPAPNGTAGPVQVAIKSRPPGISTQNFTYQDPVLLSLNPQWGPQAGGTQLTIHGQYLQTGGNISVFVGDQPCPIQEPVCPEAIICHTMPQTEPGEAVVLIVFGHVERKLLTTPFRYTANPQLVEAEPSVSFRGGGRVIRVRGTGLDVVWQPLLSVWLEDEPKVKALGVQAQDANPRRSCGAPAADPQACIHLESGLLQCSTLCSVNSSSLLLCHSPAVPDGALPKRVFFALDNMQVDFASASGGQGFLYQPNPRLAPLSHEGITHPYHLKPGHVLDVEGEGLNLGISKEEVQVHIGDGECLVKTLTLTHLYCEPPPQAPQPTNGSGTLPQFVVQMGNLRLALGPVQYEAESMMSTFPVEAQLGLGMGAAVLIAAVLLLTLMYRHKSKKALRDYQKVLVQLENLETGVGDQCRKEFTDLMTEMTDLTSDLEASGIPFLDYRTYAERAFFPGHVGCPLQPGLEGLGEEGRSVTVRQGLTQLSNLLNSKLFLLTLIHTLEEQPSFSQRDRCHVASLLSLALHSKLEYLTDIMRTLLGDLAAHYVHKNPKLMLRRTETMVEKLLTNWLSICLYTFLKEVAGEPLYMLFRAIKYQVDKGPVDAVTGKAKRTLNDSHLLREDVEFQPLTLMALVGPEADRAAGNSGVHRVPARVLDTDTITQVKEKVLDQIYKGTPFSQRPSVHSLDLEWRSGLAGHLTLSDEDLTSVTQNHWKRLNTLQHYKVPDGATVVLIPQVHNGGTVSQSLGQTGCPSGENTPMLEDGEEGGVRLWHLVKATEEAEGAKVRRSSLRDRERERSRAKAIPEIYLTRLLSMKGTLQKFVDDTFQAILSMNRPVPIAVKYLFDFLDELAEKHGIEDPETLHIWKTNSLLLRFWVNVLKNPQLIFDVQVSDNEDAILAVIAQTFIDSCMVSEHKVGRDSPVNKLLYAREIPRYKQMVEKYYADIRQSSPASYQEMNSALAELSGNYSSAPHCLEALRELYNHIHRYYDQIISALEEDPVAQKMQLACRLQQVAALVEYKVTDL.

The N-terminal stretch at 1–36 (MLTDFLQAPVMAPWSPFSLHLLLLFLPLLPLTRVHR) is a signal peptide. The 425-residue stretch at 37 to 461 (FSVPNTSFNH…TAQQVDRILV (425 aa)) folds into the Sema domain. Over 37 to 1245 (FSVPNTSFNH…MMSTFPVEAQ (1209 aa)) the chain is Extracellular. N-linked (GlcNAc...) asparagine glycosylation is present at N41. 2 disulfide bridges follow: C88–C97 and C122–C130. A glycan (N-linked (GlcNAc...) asparagine) is linked at N221. 3 disulfide bridges follow: C257–C360, C273–C305, and C323–C347. Positions 353–372 (DSPESYPCGDEHTPSPIAGR) are disordered. N-linked (GlcNAc...) asparagine glycosylation is found at N416 and N469. In terms of domain architecture, PSI 1 spans 463–515 (ACPQFPNCTTCLQARDPLCGWCILQGRCTRRGECGRAAQPNHWLWSYEDNHCP). Disulfide bonds link C464–C481, C470–C514, C473–C490, C484–C496, and C551–C569. 2 consecutive PSI domains span residues 609-671 (DCSA…EACP) and 776-822 (DCAM…QLCP). N-linked (GlcNAc...) asparagine glycosylation is found at N791, N889, N910, N946, N1090, and N1207. IPT/TIG domains follow at residues 823–914 (IPSI…FTYQ), 915–1001 (DPVL…FRYT), 1003–1134 (NPQL…FLYQ), and 1154–1221 (KPGH…QMGN). A helical transmembrane segment spans residues 1246 to 1266 (LGLGMGAAVLIAAVLLLTLMY). At 1267–1902 (RHKSKKALRD…ALVEYKVTDL (636 aa)) the chain is on the cytoplasmic side.

This sequence belongs to the plexin family. As to quaternary structure, binds MET and MST1R. Interacts with RIT2/RIN. May form homodimers (via Sema domain). Interacts (via cytoplasmic domain) with FSCN1, ARHGDIA and RAC1. Expressed in brain (at protein level). In cerebellum, strongest expression detected in Purkinje and granular cells. Detected at very low levels in several fetal tissues, including dorsal root ganglia (DRG), heart, lung, optic bulb, brain and liver.

The protein resides in the cell membrane. Its function is as follows. Receptor for SEMA5A that plays a role in axon guidance, invasive growth and cell migration. Stimulates neurite outgrowth and mediates Ca(2+)/Mg(2+)-dependent cell aggregation. In glioma cells, SEMA5A stimulation of PLXNB3 results in the disassembly of F-actin stress fibers, disruption of focal adhesions and cellular collapse as well as inhibition of cell migration and invasion through ARHGDIA-mediated inactivation of RAC1. Seem to be non-essential for normal development and function of the central nervous system. The chain is Plexin-B3 (Plxnb3) from Mus musculus (Mouse).